Reading from the N-terminus, the 206-residue chain is MISSLRGDVIDKGLDYVVIECGGVGYRCLATGDTLATLRRGESAFVLTSLVIRDDAHTLYAFSTSEQRETFGILQKVSGVGARLAMGVMSVLQPADIARAVEEGDIKTLQQAPGVGKRLAERMAVDLKGKFPALEATSGQATIGDIAATGNDTALQSQVVEALVGLGFTEAKAATAVKKILEEQNGTTDPSSVLREALQRLSGQKR.

The segment at 1–63 (MISSLRGDVI…DDAHTLYAFS (63 aa)) is domain I. Residues 64-142 (TSEQRETFGI…ALEATSGQAT (79 aa)) form a domain II region. Residues 143–150 (IGDIAATG) are flexible linker. The segment at 151 to 206 (NDTALQSQVVEALVGLGFTEAKAATAVKKILEEQNGTTDPSSVLREALQRLSGQKR) is domain III.

This sequence belongs to the RuvA family. As to quaternary structure, homotetramer. Forms an RuvA(8)-RuvB(12)-Holliday junction (HJ) complex. HJ DNA is sandwiched between 2 RuvA tetramers; dsDNA enters through RuvA and exits via RuvB. An RuvB hexamer assembles on each DNA strand where it exits the tetramer. Each RuvB hexamer is contacted by two RuvA subunits (via domain III) on 2 adjacent RuvB subunits; this complex drives branch migration. In the full resolvosome a probable DNA-RuvA(4)-RuvB(12)-RuvC(2) complex forms which resolves the HJ.

The protein resides in the cytoplasm. In terms of biological role, the RuvA-RuvB-RuvC complex processes Holliday junction (HJ) DNA during genetic recombination and DNA repair, while the RuvA-RuvB complex plays an important role in the rescue of blocked DNA replication forks via replication fork reversal (RFR). RuvA specifically binds to HJ cruciform DNA, conferring on it an open structure. The RuvB hexamer acts as an ATP-dependent pump, pulling dsDNA into and through the RuvAB complex. HJ branch migration allows RuvC to scan DNA until it finds its consensus sequence, where it cleaves and resolves the cruciform DNA. The protein is Holliday junction branch migration complex subunit RuvA of Corynebacterium urealyticum (strain ATCC 43042 / DSM 7109).